Consider the following 455-residue polypeptide: uncharacterized protein (455 aa).

Low complexity predominate over residues 1-20; the sequence is MGCCLSKKPSPSLPSSVKPS. Disordered regions lie at residues 1–234 and 258–304; these read MGCC…IPAT and RIAA…QNTK. Basic and acidic residues-rich tracts occupy residues 35–46, 61–75, 129–143, 156–166, and 173–186; these read EEAKPKSEKLNQ, SHEE…DKDS, RSFD…RGGD, RGVERVHGSPR, and PSRE…RERG. Polar residues predominate over residues 213 to 224; the sequence is SCGSSVNSSNNR. A compositionally biased stretch (low complexity) spans 260–271; it reads AASPRSKSPARA.

This is an uncharacterized protein from Arabidopsis thaliana (Mouse-ear cress).